Here is a 438-residue protein sequence, read N- to C-terminus: Plasmalemma vesicle-associated protein (438 aa).

The Cytoplasmic segment spans residues 1-26 (MGLSMDRSPYSRTGDRDRGCWYYLRY). The chain crosses the membrane as a helical; Signal-anchor for type II membrane protein span at residues 27–47 (FFLFVSLIQFLIILGLVLFMI). At 48-438 (YGNVHATTES…LVNPAVPPSG (391 aa)) the chain is on the extracellular side. Asn-82, Asn-88, Asn-112, and Asn-150 each carry an N-linked (GlcNAc...) asparagine glycan. Positions 289–383 (AGIERVTREN…TEVDVRISAL (95 aa)) form a coiled coil. Positions 393-438 (PAIQPRLPGPPPNPPPIDPASLEEFKKRILESQRPPLVNPAVPPSG) are disordered. 2 stretches are compositionally biased toward pro residues: residues 399–410 (LPGPPPNPPPID) and 429–438 (LVNPAVPPSG).

Homodimer. As to expression, expressed in lung (alveolar endothelial and bronchial epithelial cells), kidney (endothelium of peritubular capillaries), spleen, liver, adrenal (endothelial cells of the zona reticularis of the cortex and chromaffin cells in the medulla), pancreas (islets of Langerhans), testis (germ cells, interstitial cells in neonatal testis and spermatids), ovary (stromal endothelial, thecal layer of developing follicles, luteal cells within the corpus luteum), intestine (endothelium of capillaries of the intestinal villi) and pituitary (pituicyte cells in the neural lobe) (at protein level). Expressed in lung, kidney, spleen, liver, adrenal, testis, heart, muscle, pituitary, thyroid and ovary.

It localises to the cell membrane. It is found in the membrane. The protein resides in the caveola. The protein localises to the cytoplasm. Its subcellular location is the perinuclear region. In terms of biological role, endothelial cell-specific membrane protein involved in the formation of the diaphragms that bridge endothelial fenestrae. It is also required for the formation of stomata of caveolae and transendothelial channels. Functions in microvascular permeability, endothelial fenestrae contributing to the passage of water and solutes and regulating transcellular versus paracellular flow in different organs. Plays a specific role in embryonic development. The sequence is that of Plasmalemma vesicle-associated protein (Plvap) from Rattus norvegicus (Rat).